Here is a 179-residue protein sequence, read N- to C-terminus: Probable chorismate pyruvate-lyase (179 aa).

Substrate is bound by residues Arg82, Leu120, and Glu165.

Belongs to the UbiC family.

Its subcellular location is the cytoplasm. The enzyme catalyses chorismate = 4-hydroxybenzoate + pyruvate. It functions in the pathway cofactor biosynthesis; ubiquinone biosynthesis. Its function is as follows. Removes the pyruvyl group from chorismate, with concomitant aromatization of the ring, to provide 4-hydroxybenzoate (4HB) for the ubiquinone pathway. The chain is Probable chorismate pyruvate-lyase from Vibrio vulnificus (strain CMCP6).